Here is a 32-residue protein sequence, read N- to C-terminus: Cytochrome b6-f complex subunit 7 (32 aa).

A helical transmembrane segment spans residues 9–27 (AAVFWILIPIGLVGGALLL).

Belongs to the PetM family. The 4 large subunits of the cytochrome b6-f complex are cytochrome b6, subunit IV (17 kDa polypeptide, PetD), cytochrome f and the Rieske protein, while the 4 small subunits are PetG, PetL, PetM and PetN. The complex functions as a dimer.

Its subcellular location is the cellular thylakoid membrane. Functionally, component of the cytochrome b6-f complex, which mediates electron transfer between photosystem II (PSII) and photosystem I (PSI), cyclic electron flow around PSI, and state transitions. The protein is Cytochrome b6-f complex subunit 7 of Prochlorococcus marinus (strain MIT 9301).